A 143-amino-acid polypeptide reads, in one-letter code: Ribonuclease H (143 aa).

The region spanning M1–E140 is the RNase H type-1 domain. Positions 8, 46, 68, and 132 each coordinate Mg(2+).

This sequence belongs to the RNase H family. Monomer. The cofactor is Mg(2+).

The protein localises to the cytoplasm. It catalyses the reaction Endonucleolytic cleavage to 5'-phosphomonoester.. Its function is as follows. Endonuclease that specifically degrades the RNA of RNA-DNA hybrids. The sequence is that of Ribonuclease H from Legionella pneumophila (strain Paris).